The sequence spans 1754 residues: Collagen alpha-1(XVIII) chain (1754 aa).

The signal sequence occupies residues 1 to 23; that stretch reads MAPYPCGCHILLLLFCCLAAARA. Positions 42-104 are disordered; sequence ATTIPEPQGP…TSAESPDAPE (63 aa). Residues 57 to 73 are compositionally biased toward polar residues; the sequence is TADTTTHVTPRNGSTEP. N-linked (GlcNAc...) asparagine glycans are attached at residues asparagine 68, asparagine 129, and asparagine 164. The tract at residues 152–256 is disordered; it reads LALAGPSSTP…APSQQLQRPD (105 aa). The span at 157–169 shows a compositional bias: polar residues; sequence PSSTPQENGTTLW. A compositionally biased stretch (low complexity) spans 215-253; that stretch reads SGRASLSSLLGGAPPWGSLQDPDSQGLSPAAAAPSQQLQ. The 118-residue stretch at 329-446 folds into the FZ domain; the sequence is APAGRCLPLP…TQEDGYCVLI (118 aa). 5 disulfide bridges follow: cysteine 334-cysteine 397, cysteine 344-cysteine 390, cysteine 381-cysteine 419, cysteine 408-cysteine 443, and cysteine 412-cysteine 432. The 189-residue stretch at 456-644 folds into the Laminin G-like domain; the sequence is EVGLLQLLGD…IAELKVRRDP (189 aa). Positions 645–751 are nonhelical region 1 (NC1); that stretch reads QVSPMHCLDE…RTPGGRVKEG (107 aa). A disordered region spans residues 645–1443; that stretch reads QVSPMHCLDE…GPPGTMGASS (799 aa). The span at 672–681 shows a compositional bias: basic and acidic residues; the sequence is DARELLREET. Threonine 696 carries the phosphothreonine modification. A compositionally biased stretch (polar residues) spans 717-738; sequence QTTVASLGAQTLPGSDSVSTWD. The interval 752–785 is triple-helical region 1 (COL1); sequence GLKGQKGEPGVPGPPGRAGPPGSPCLPGPPGLPC. The span at 762 to 789 shows a compositional bias: pro residues; that stretch reads VPGPPGRAGPPGSPCLPGPPGLPCPVSP. The interval 786 to 795 is nonhelical region 2 (NC2); sequence PVSPLGPAGP. The triple-helical region 2 (COL2) stretch occupies residues 796 to 875; that stretch reads ALQTVPGPQG…QGPPGPPGPS (80 aa). A compositionally biased stretch (basic and acidic residues) spans 815 to 831; sequence TPGRDGEPGDPGEDGKP. The span at 833–846 shows a compositional bias: low complexity; it reads DTGPQGFPGTPGDV. Positions 862 to 874 are enriched in pro residues; sequence PPGPQGPPGPPGP. The segment at 876–899 is nonhelical region 3 (NC3); that stretch reads FRHDKLTFIDMEGSGFGGDLEALR. Residue serine 889 is glycosylated (O-linked (Xyl...) (chondroitin sulfate) serine). The interval 900 to 1021 is triple-helical region 3 (COL3); the sequence is GPRGFPGPPG…PGPPGPPGPG (122 aa). Pro residues predominate over residues 904-914; the sequence is FPGPPGPPGVP. Asparagine 926 carries an N-linked (GlcNAc...) asparagine glycan. Low complexity predominate over residues 930–942; the sequence is VPGPAGLPGVPGR. Over residues 946–961 the composition is skewed to pro residues; it reads PGFPGLPGPPGPPGRE. The span at 976-1003 shows a compositional bias: low complexity; it reads AGAPGHKGSKGAPGPAGARGESGLAGAP. Over residues 1005–1021 the composition is skewed to pro residues; sequence PAGPPGPPGPPGPPGPG. The nonhelical region 4 (NC4) stretch occupies residues 1022 to 1044; that stretch reads LPAGFDDMEGSGGPFWSTARSAD. The triple-helical region 4 (COL4) stretch occupies residues 1045–1127; that stretch reads GPQGPPGLPG…PGPPGPPGPV (83 aa). Low complexity predominate over residues 1053–1065; sequence PGLKGDPGVPGLP. The segment covering 1095–1109 has biased composition (basic and acidic residues); that stretch reads KGDRGSRGEKGDPGK. Residues 1117–1126 show a composition bias toward pro residues; sequence LPGPPGPPGP. Residues 1128 to 1141 form a nonhelical region 5 (NC5) region; that stretch reads VYVSEQDGSVLSVP. Positions 1141–1153 are enriched in low complexity; sequence PGPEGRPGFAGFP. Residues 1142 to 1183 form a triple-helical region 5 (COL5) region; the sequence is GPEGRPGFAGFPGPAGPKGNLGSKGERGSPGPKGEKGEPGSI. The segment at 1184-1196 is nonhelical region 6 (NC6); the sequence is FSPDGGALGPAQK. Positions 1197 to 1269 are triple-helical region 6 (COL6); the sequence is GAKGEPGFRG…PGPPGPPGTP (73 aa). Pro residues predominate over residues 1254–1268; that stretch reads PGPPGPPGPPGPPGT. The segment at 1270 to 1279 is nonhelical region 7 (NC7); that stretch reads VYDSNVFAES. The triple-helical region 7 (COL7) stretch occupies residues 1280–1312; sequence SRPGPPGLPGNQGPPGPKGAKGEVGPPGPPGQF. A compositionally biased stretch (pro residues) spans 1282 to 1296; the sequence is PGPPGLPGNQGPPGP. Residues 1313–1324 are nonhelical region 8 (NC8); it reads PFDFLQLEAEMK. The span at 1321 to 1341 shows a compositional bias: basic and acidic residues; it reads AEMKGEKGDRGDAGQKGERGE. The interval 1325-1346 is triple-helical region 8 (COL8); it reads GEKGDRGDAGQKGERGEPGGGG. Residues 1330–1332 carry the Cell attachment site motif; the sequence is RGD. The segment at 1347-1353 is nonhelical region 9 (NC9); it reads FFGSSLP. Pro residues-rich tracts occupy residues 1353 to 1365, 1401 to 1414, and 1424 to 1436; these read PGPP…PGPR, PPGP…PSFP, and PGPP…PGPP. Residues 1354–1411 form a triple-helical region 9 (COL9) region; it reads GPPGPPGPPGPRGYPGIPGPKGESIRGQPGPPGPQGPPGIGYEGRQGPPGPPGPPGPP. The tract at residues 1412 to 1424 is nonhelical region 10 (NC10); the sequence is SFPGPHRQTISVP. A triple-helical region 10 (COL10) region spans residues 1425-1442; that stretch reads GPPGPPGPPGPPGTMGAS. Residues 1443–1754 form a nonhelical region 11 (NC11) region; that stretch reads SGVRLWATRQ…IENSFMTASK (312 aa). The non-collagenous domain 1 association domain stretch occupies residues 1456–1501; that stretch reads GQVHEVPEGWLIFVAEQEELYVRVQNGFRKVQLEARTPLPRGTDNE. The interval 1502 to 1571 is non-collagenous domain 1 hinge region; the sequence is VAALQPPVVQ…RPARPTSPPA (70 aa). The tract at residues 1511–1556 is disordered; it reads QLHDSNPYPRREHPHPTARPWRADDILASPPRLPEPQPYPGAPHHS. The span at 1519 to 1535 shows a compositional bias: basic and acidic residues; it reads PRREHPHPTARPWRADD. A compositionally biased stretch (pro residues) spans 1541–1551; it reads PRLPEPQPYPG. Threonine 1567 carries an O-linked (GalNAc...) threonine glycan. Residues histidine 1572, histidine 1574, histidine 1582, and aspartate 1647 each contribute to the Zn(2+) site. 2 disulfides stabilise this stretch: cysteine 1604–cysteine 1744 and cysteine 1706–cysteine 1736.

It belongs to the multiplexin collagen family. Forms homotrimers. Recombinant non-collagenous domain 1 has stronger affinity to NID1, HSPG2 and laminin-1:NID1 complex and lower affinity to FBLN1 and FBLN2 than endostatin. In terms of assembly, monomeric. Interacts with KDR/VEGFR2. Interacts with the ITGA5:ITGB1 complex. Interacts with NID1, HSPG2, laminin-1:NID1 complex, FBLN1 and FBLN2. Post-translationally, prolines at the third position of the tripeptide repeating unit (G-X-Y) of the triple-helical regions are hydroxylated. In terms of processing, circulating endostatins are found as sialoglycoprotein and asialoglycoprotein structures. Undergoes proteolytic processing by CTSL/cathepsin-L and elastase-like proteases to generate both non-collagenous domain 1 trimers and endostatin monomers. In tissue extracts (brain, skeletal muscle, heart, kidney, testis and liver) predominantly bands of approximately 38 kDa are detected; recombinant non-collagenous domain 1 shows similar mobility. In vitro, several proteolytic cleavage sites in the non-collagenous domain 1 hinge region generating different endostatin-like peptides are reported. In terms of tissue distribution, detected in placenta (at protein level). Present in multiple organs with highest levels in liver, lung and kidney.

It localises to the secreted. Its subcellular location is the extracellular space. The protein resides in the extracellular matrix. The protein localises to the basement membrane. In terms of biological role, probably plays a major role in determining the retinal structure as well as in the closure of the neural tube. Functionally, may regulate extracellular matrix-dependent motility and morphogenesis of endothelial and non-endothelial cells; the function requires homotrimerization and implicates MAPK signaling. Potently inhibits endothelial cell proliferation and angiogenesis. May inhibit angiogenesis by binding to the heparan sulfate proteoglycans involved in growth factor signaling. Inhibits VEGFA-induced endothelial cell proliferation and migration. Seems to inhibit VEGFA-mediated signaling by blocking the interaction of VEGFA to its receptor KDR/VEGFR2. Modulates endothelial cell migration in an integrin-dependent manner implicating integrin ITGA5:ITGB1 and to a lesser extent ITGAV:ITGB3 and ITGAV:ITGB5. May negatively regulate the activity of homotrimeric non-collagenous domain 1. The protein is Collagen alpha-1(XVIII) chain of Homo sapiens (Human).